A 416-amino-acid polypeptide reads, in one-letter code: MSLVAIGINHKTATVDLREKVAFSPDKIHDAMKSLASRTRSGEAVIVSTCNRTELYCNNGDEADIIAWLEEYHGLDHKDVAPCLYNYHGQDAVRHLMRVASGLDSLILGEPQILGQVKQAFVKAKEAGTVALTIDRLFQNTFSVAKKVRTDTEIGAAAVSVAFAAVSMAKHIFSSISTTKVLLIGAGETIELVAKHLKDNGVASMVVANRTLERAQGMCEEFGATAITLAQIPDYLPKADIVISSTASPLPILGKGMVEKALKQRRHQPMLLVDIAVPRDIEPEVADLDDAFLYTVDDLHSIIEQNMASRKEAAEQAEVITEEQSFLFMDWIRSLESVDSIREYRSQSMAVKDELVERALNKLAQGSDTEQVLIELANRLTNKLIHAPTQALTAASRQGDLNTLGQLRSALGLDKN.

Substrate contacts are provided by residues 49–52, Ser105, 110–112, and Gln116; these read TCNR and EPQ. Catalysis depends on Cys50, which acts as the Nucleophile. 185–190 contributes to the NADP(+) binding site; it reads GAGETI.

This sequence belongs to the glutamyl-tRNA reductase family. As to quaternary structure, homodimer.

It catalyses the reaction (S)-4-amino-5-oxopentanoate + tRNA(Glu) + NADP(+) = L-glutamyl-tRNA(Glu) + NADPH + H(+). It functions in the pathway porphyrin-containing compound metabolism; protoporphyrin-IX biosynthesis; 5-aminolevulinate from L-glutamyl-tRNA(Glu): step 1/2. Functionally, catalyzes the NADPH-dependent reduction of glutamyl-tRNA(Glu) to glutamate 1-semialdehyde (GSA). This is Glutamyl-tRNA reductase from Shewanella baltica (strain OS223).